The following is a 164-amino-acid chain: Large ribosomal subunit protein uL11 (164 aa).

Belongs to the universal ribosomal protein uL11 family. As to quaternary structure, part of the ribosomal stalk of the 50S ribosomal subunit. Interacts with L10 and the large rRNA to form the base of the stalk. L10 forms an elongated spine to which L12 dimers bind in a sequential fashion forming a multimeric L10(L12)X complex.

Forms part of the ribosomal stalk which helps the ribosome interact with GTP-bound translation factors. This Pyrococcus furiosus (strain ATCC 43587 / DSM 3638 / JCM 8422 / Vc1) protein is Large ribosomal subunit protein uL11.